Reading from the N-terminus, the 511-residue chain is 2,3-bisphosphoglycerate-independent phosphoglycerate mutase (511 aa).

The Mn(2+) site is built by Asp-14 and Ser-64. Residue Ser-64 is the Phosphoserine intermediate of the active site. Residues His-125, 155–156 (RD), Arg-187, Arg-193, 259–262 (RADR), and Lys-333 each bind substrate. Residues Asp-400, His-404, Asp-441, His-442, and His-460 each contribute to the Mn(2+) site.

Belongs to the BPG-independent phosphoglycerate mutase family. Monomer. Mn(2+) serves as cofactor.

It catalyses the reaction (2R)-2-phosphoglycerate = (2R)-3-phosphoglycerate. Its pathway is carbohydrate degradation; glycolysis; pyruvate from D-glyceraldehyde 3-phosphate: step 3/5. In terms of biological role, catalyzes the interconversion of 2-phosphoglycerate and 3-phosphoglycerate. The protein is 2,3-bisphosphoglycerate-independent phosphoglycerate mutase of Pseudomonas putida (strain GB-1).